The sequence spans 212 residues: MPVHEIRHPLVRHKLGIMRRVDLSTKSFRELSQEVAALLTYEASKDMALAPATVEGWCGTVEVEKIAGKKVTVVPILRAGIGMLDGVLSLIPGAKVSVVGLARNEETLQAHTYLERLVGELDQRLALIVDPMLATGGSMVATIDMLKRAGAREIRALTLVAAPEGIKAVLDAHPDVNIYTASIDQGLNEQGYIMPGLGDAGDRIFGTKQKVE.

5-phospho-alpha-D-ribose 1-diphosphate contacts are provided by residues R78, R103, and 130 to 138 (DPMLATGGS). Uracil-binding positions include I193 and 198–200 (GDA). Position 199 (D199) interacts with 5-phospho-alpha-D-ribose 1-diphosphate.

The protein belongs to the UPRTase family. It depends on Mg(2+) as a cofactor.

It catalyses the reaction UMP + diphosphate = 5-phospho-alpha-D-ribose 1-diphosphate + uracil. It participates in pyrimidine metabolism; UMP biosynthesis via salvage pathway; UMP from uracil: step 1/1. Allosterically activated by GTP. Catalyzes the conversion of uracil and 5-phospho-alpha-D-ribose 1-diphosphate (PRPP) to UMP and diphosphate. The protein is Uracil phosphoribosyltransferase of Bordetella avium (strain 197N).